The following is a 201-amino-acid chain: tRNA (guanine-N(7)-)-methyltransferase (201 aa).

4 residues coordinate S-adenosyl-L-methionine: Glu-33, Glu-58, Asp-85, and Asp-106. Asp-106 is an active-site residue. Substrate-binding positions include Lys-110, Asp-142, and 180 to 183 (TTYE).

The protein belongs to the class I-like SAM-binding methyltransferase superfamily. TrmB family.

It catalyses the reaction guanosine(46) in tRNA + S-adenosyl-L-methionine = N(7)-methylguanosine(46) in tRNA + S-adenosyl-L-homocysteine. Its pathway is tRNA modification; N(7)-methylguanine-tRNA biosynthesis. Functionally, catalyzes the formation of N(7)-methylguanine at position 46 (m7G46) in tRNA. This is tRNA (guanine-N(7)-)-methyltransferase from Mesomycoplasma hyopneumoniae (strain 232) (Mycoplasma hyopneumoniae).